A 244-amino-acid polypeptide reads, in one-letter code: uncharacterized protein (244 aa).

This is an uncharacterized protein from Saccharomyces cerevisiae (strain ATCC 204508 / S288c) (Baker's yeast).